The sequence spans 294 residues: Bifunctional protein FolD (294 aa).

NADP(+) contacts are provided by residues 171–173 (GRS), Ser-196, and Ile-237.

Belongs to the tetrahydrofolate dehydrogenase/cyclohydrolase family. Homodimer.

The catalysed reaction is (6R)-5,10-methylene-5,6,7,8-tetrahydrofolate + NADP(+) = (6R)-5,10-methenyltetrahydrofolate + NADPH. The enzyme catalyses (6R)-5,10-methenyltetrahydrofolate + H2O = (6R)-10-formyltetrahydrofolate + H(+). It functions in the pathway one-carbon metabolism; tetrahydrofolate interconversion. In terms of biological role, catalyzes the oxidation of 5,10-methylenetetrahydrofolate to 5,10-methenyltetrahydrofolate and then the hydrolysis of 5,10-methenyltetrahydrofolate to 10-formyltetrahydrofolate. The protein is Bifunctional protein FolD of Synechocystis sp. (strain ATCC 27184 / PCC 6803 / Kazusa).